Reading from the N-terminus, the 3421-residue chain is Hemocyanin 2 (3421 aa).

Positions 1–19 (MWTILALLTATLLFEGAFS) are cleaved as a signal peptide. Residues 20-442 (VDTVVRKNVD…KPPVPVAQAN (423 aa)) are functional unit a (wall). His62 is a binding site for Cu cation. A disulfide bridge connects residues Cys68 and Cys78. The segment at residues 79 to 81 (CLH) is a cross-link (2'-(S-cysteinyl)-histidine (Cys-His)). The Cu cation site is built by His81, His90, His200, His204, and His231. 2 cysteine pairs are disulfide-bonded: Cys190-Cys257 and Cys344-Cys356. N-linked (GlcNAc...) asparagine glycosylation is present at Asn408. Positions 443-853 (LAVRKNINDL…RADAKDFGHS (411 aa)) are functional unit b (wall). Cu cation is bound at residue His483. The cysteines at positions 489 and 500 are disulfide-linked. The 2'-(S-cysteinyl)-histidine (Cys-His) cross-link spans 501–503 (CVH). 6 residues coordinate Cu cation: His503, His512, His622, His626, His653, and His894. The cysteines at positions 612 and 678 are disulfide-linked. The WD 1 repeat unit spans residues 632 to 673 (SEKYSMSSLHYTAFDPIFYLHHSNVDRLWAIWQALQIRRGKS). Residues 854 to 1275 (RKIRKAVDSL…DEYREAVTSA (422 aa)) are functional unit c (wall). An intrachain disulfide couples Cys900 to Cys911. Residues 912–914 (CVH) constitute a cross-link (2'-(S-cysteinyl)-histidine (Cys-His)). 5 residues coordinate Cu cation: His914, His923, His1033, His1037, and His1063. Disulfide bonds link Cys1023-Cys1090 and Cys1180-Cys1187. The stretch at 1043 to 1084 (NEPYSMSSLRYTTYDPIFFLHRSNTDRLWAIWQALQKYRGKP) is one WD 2 repeat. N-linked (GlcNAc...) asparagine glycosylation occurs at Asn1183. The functional unit d (wall) stretch occupies residues 1276 to 1685 (SHIRKNIRDL…NIYYDGLSQH (410 aa)). His1313 contacts Cu cation. Cys1319 and Cys1328 are joined by a disulfide. A cross-link (2'-(S-cysteinyl)-histidine (Cys-His)) is located at residues 1329–1331 (CVH). His1331 and His1340 together coordinate Cu cation. The WD 3 repeat unit spans residues 1387–1425 (QTFDPNPFFRGHIAFENAVTSRDPQPELWDNKDFYENVM). Disulfide bonds link Cys1434-Cys1501 and Cys1590-Cys1599. Cu cation is bound by residues His1444, His1448, and His1475. The WD 4 repeat unit spans residues 1454-1495 (RAKYSLSSLDYTAFDPVFFLHHANVDRIWAIWQDLQRYRKKP). The N-linked (GlcNAc...) asparagine glycan is linked to Asn1653. Positions 1686–2102 (NLVRKEVSSL…HGINVRHVGR (417 aa)) are functional unit e (wall). His1726 is a binding site for Cu cation. A disulfide bond links Cys1732 and Cys1743. Residues 1744–1746 (CLH) constitute a cross-link (2'-(S-cysteinyl)-histidine (Cys-His)). Positions 1746, 1755, 1868, 1872, and 1899 each coordinate Cu cation. 2 disulfides stabilise this stretch: Cys1858–Cys1925 and Cys2014–Cys2020. A WD 5 repeat occupies 1878-1919 (SKTHSIGHLHYASYDPLFYIHHSQTDRIWAIWQALQEHRGLS). Positions 2103-2522 (NRIRMELSEL…DDHGSDHIAG (420 aa)) are functional unit f (wall). A Cu cation-binding site is contributed by His2143. An intrachain disulfide couples Cys2149 to Cys2159. Residues 2160-2162 (CIH) constitute a cross-link (2'-(S-cysteinyl)-histidine (Cys-His)). 5 residues coordinate Cu cation: His2162, His2171, His2281, His2285, and His2312. The stretch at 2168 to 2204 (PHWHRLYTLQMDMALLSHGSAVAIPYWDWTKPISKLP) is one WD 6 repeat. 2 cysteine pairs are disulfide-bonded: Cys2271/Cys2338 and Cys2425/Cys2431. The interval 2523–2929 (SGVRKDVTSL…SGHDHSERHD (407 aa)) is functional unit g (internal arc). His2563 contributes to the Cu cation binding site. Cys2569 and Cys2579 are joined by a disulfide. The segment at residues 2580 to 2582 (CTH) is a cross-link (2'-(S-cysteinyl)-histidine (Cys-His)). 5 residues coordinate Cu cation: His2582, His2591, His2691, His2695, and His2722. Intrachain disulfides connect Cys2681–Cys2748 and Cys2835–Cys2841. Residues 2700-2742 (GHTPYGMSSLEYTAYDPLFYLHHSNTDRIWAIWQALQKYRGFQ) form a WD 7 repeat. The segment at 2898 to 2927 (PSDRIKSPTIEHHGGDHHGGDTSGHDHSER) is disordered. Positions 2930–3421 (GFFRKEVGSL…VRIHIHIEDE (492 aa)) are functional unit h (internal slab). His2970 contacts Cu cation. Cysteines 2976 and 2986 form a disulfide. Residues 2987–2989 (CVH) constitute a cross-link (2'-(S-cysteinyl)-histidine (Cys-His)). Residues His2989, His2998, His3099, His3103, and His3130 each coordinate Cu cation. Disulfide bonds link Cys3089–Cys3156 and Cys3374–Cys3407. Residues 3109 to 3150 (TETYSMSSLAFSAYDPVFMILHSGLDRLWIIWQELQKLRKKP) form a WD 8 repeat.

This sequence belongs to the tyrosinase family. Hemocyanin subfamily. Homo-didecamer and homo-multidecamer. In terms of processing, probably N-glycosylated. Asn-2489 is buried deeply in the protein which make it inaccessible for sugar attachment. Hemolymph.

It is found in the secreted. It localises to the extracellular space. Hemocyanins are copper-containing oxygen carriers occurring freely dissolved in the hemolymph of many mollusks and arthropods. The protein is Hemocyanin 2 of Megathura crenulata (Giant keyhole limpet).